A 344-amino-acid chain; its full sequence is Dihydroorotase (344 aa).

Zn(2+)-binding residues include His-13 and His-15. Substrate-binding positions include 15–17 (HLR) and Asn-41. 3 residues coordinate Zn(2+): Lys-99, His-136, and His-174. The residue at position 99 (Lys-99) is an N6-carboxylysine. His-136 provides a ligand contact to substrate. Leu-219 serves as a coordination point for substrate. Asp-247 lines the Zn(2+) pocket. Asp-247 is an active-site residue. Substrate-binding residues include His-251 and Ala-263.

The protein belongs to the metallo-dependent hydrolases superfamily. DHOase family. Class II DHOase subfamily. Homodimer. It depends on Zn(2+) as a cofactor.

The enzyme catalyses (S)-dihydroorotate + H2O = N-carbamoyl-L-aspartate + H(+). The protein operates within pyrimidine metabolism; UMP biosynthesis via de novo pathway; (S)-dihydroorotate from bicarbonate: step 3/3. Functionally, catalyzes the reversible cyclization of carbamoyl aspartate to dihydroorotate. This chain is Dihydroorotase, found in Microcystis aeruginosa (strain NIES-843 / IAM M-2473).